The sequence spans 500 residues: Cytochrome P450 monooxygenase astJ (500 aa).

Cys-440 contacts heme.

Belongs to the cytochrome P450 family. Requires heme as cofactor.

Its pathway is secondary metabolite biosynthesis; terpenoid biosynthesis. Functionally, cytochrome P450 monooxygenase; part of the gene cluster that mediates the biosynthesis of astellolides, drimane-type sesquiterpene esters that show antimicrobial, anti-inflammatory, and anti-tumor activities. The first step in astellolide biosynthesis is performed by the sesquiterpene cyclase astC that catalyzes the formation of drimanyl pyrophosphate from farnesyl pyrophosphate. Drimanyl pyrophosphate is then dephosphorylated by the sesquiterpene phosphatase astI to produce drimanyl monophosphate which is further dephosphorylated to drim-8-ene-11-ol by atsK. Drim-8-ene-11-ol is converted to confertifolin, probably by the cytochrome P450 monooxygenase astD and/or the dehydrogenase astE. The cytochrome P450 monooxygenases astB, astF and astJ then hydroxylate confertifolin at C6, C14, or C15 to form trihydroxy confertifolin. The nonribosomal peptide synthetase astA catalyzes ester bond formation between trihydroxy contifolin and benzoic acid (BA) or 4-hydroxy benzoic acid (4HBA), leading to the formation of dideacetyl astellolides A and B, respectively. Finally, the O-acetyltransferase astG converts dideacetyl astellolides A and B into deacetyl astellolides A and B. The protein is Cytochrome P450 monooxygenase astJ of Aspergillus oryzae (strain ATCC 42149 / RIB 40) (Yellow koji mold).